The sequence spans 90 residues: Small ribosomal subunit protein bS18 (90 aa).

A compositionally biased stretch (basic and acidic residues) spans 1–14 (MARDNGNKDRDGKR). A disordered region spans residues 1–23 (MARDNGNKDRDGKRPNGGRNRKM).

This sequence belongs to the bacterial ribosomal protein bS18 family. As to quaternary structure, part of the 30S ribosomal subunit. Forms a tight heterodimer with protein bS6.

Binds as a heterodimer with protein bS6 to the central domain of the 16S rRNA, where it helps stabilize the platform of the 30S subunit. The sequence is that of Small ribosomal subunit protein bS18 from Clostridium acetobutylicum (strain ATCC 824 / DSM 792 / JCM 1419 / IAM 19013 / LMG 5710 / NBRC 13948 / NRRL B-527 / VKM B-1787 / 2291 / W).